The chain runs to 452 residues: BUB3-interacting and GLEBS motif-containing protein ZNF207 (452 aa).

Residues 1 to 92 (MGRKKKKQLK…EGIPEKDMEE (92 aa)) form a microtubule-binding region region. 2 C2H2-type zinc fingers span residues 11-34 (PWCW…KAKH) and 35-58 (FKCH…MQVH). Disordered regions lie at residues 99 to 131 (QKTQ…SFQQ) and 298 to 330 (STMS…TSAT). The span at 113 to 123 (DDSDYDDDDDT) shows a compositional bias: acidic residues. The segment at 329–361 (ATSKLVHPDEDISLEEKRAQLPKYQRNLPRPGQ) is GLEBS.

As to quaternary structure, interacts (via GLEBS region) with bub3.

The protein localises to the nucleus. It localises to the chromosome. It is found in the centromere. The protein resides in the kinetochore. Its subcellular location is the cytoplasm. The protein localises to the cytoskeleton. It localises to the spindle. Its function is as follows. Kinetochore- and microtubule-binding protein that plays a key role in spindle assembly. Znf207/BuGZ is mainly composed of disordered low-complexity regions and undergoes phase transition or coacervation to form temperature-dependent liquid droplets. Coacervation promotes microtubule bundling and concentrates tubulin, promoting microtubule polymerization and assembly of spindle and spindle matrix by concentrating its building blocks. In Xenopus laevis (African clawed frog), this protein is BUB3-interacting and GLEBS motif-containing protein ZNF207.